We begin with the raw amino-acid sequence, 303 residues long: MKIIFMGSPEFSVSALSYLLENESHEVVAVYTKIPKPAGRRGRILTKTPVHIIAEQNNIEVNTPKSLKHDAEQEKILSLNPDVIVVVAYGLIIPQGVLSIPKYGCINIHPSLLPRWRGAAPIHYAILSGDDKTGVTIIQMNELLDEGDILLQRDIPIDEQDNIDTLSKKLAHLGSSMLIEVLDNIDNLVPIKQNNDDATYAHKIIDFHIDFNEAADVICRKVRALYPRAFLLFNGKRLRILKTSYYSDSSVQDLKPGAVIDSHMNIKCKDGVLVPLVVQMEGKNPCNIDDFILGYNVLNCSIA.

111–114 (SLLP) is a binding site for (6S)-5,6,7,8-tetrahydrofolate.

This sequence belongs to the Fmt family.

The catalysed reaction is L-methionyl-tRNA(fMet) + (6R)-10-formyltetrahydrofolate = N-formyl-L-methionyl-tRNA(fMet) + (6S)-5,6,7,8-tetrahydrofolate + H(+). Attaches a formyl group to the free amino group of methionyl-tRNA(fMet). The formyl group appears to play a dual role in the initiator identity of N-formylmethionyl-tRNA by promoting its recognition by IF2 and preventing the misappropriation of this tRNA by the elongation apparatus. This Ehrlichia canis (strain Jake) protein is Methionyl-tRNA formyltransferase.